The primary structure comprises 469 residues: MAAASPLRDCQAWKDARLPLSTTSNEACKLFDATLTQYVKWTNDKSLGGIEGCLSKLKAADPTFVMGHAMATGLVLIGTGSSVKLDKELDLAVKTMVEISRTQPLTRREQLHVSAVETFANGNFPKACELWEQILQDHPTDMLALKFSHDAYFYLGYQEQMRDSVARIYPFWTPDIPLSSYVKGIYSFGLMETNFYDQAEKLAKEALSINPTDAWSVHTVAHIHEMKAEIKDGLEFMQHSETFWKDSDMLACHNYWHWALYLIEKGEYEAALTIYDTHILPSLQANDAMLDVVDSCSMLYRLQMEGVSVGQRWQDVLPVARKHSRDHILLFNDAHFLMASLGAHDPQTTQELLTTLRDASESPGENCQHLLARDVGLPLCQALVEAEDGNPDRVLELLLPIRYRIVQLGGSNAQRDVFNQLLIHAALNCTSSVHKNVARSLLMERDALKPNSPLTERLIRKAATVHLMQ.

A2 bears the N-acetylalanine mark. Residue S5 is modified to Phosphoserine. 3 TPR repeats span residues R108–D141, S180–D213, and C252–A285.

The protein belongs to the TTC38 family.

The polypeptide is Tetratricopeptide repeat protein 38 (TTC38) (Homo sapiens (Human)).